The following is a 731-amino-acid chain: Zinc finger protein 615 (731 aa).

Positions 8–79 (LTLEDVAVDF…EDEIYSRICS (72 aa)) constitute a KRAB domain. 19 C2H2-type zinc fingers span residues 204-226 (HVCSECGKAFLKLSQFIDHQRVH), 232-254 (HVCSMCGKAFSRKSRLMDHQRTH), 260-282 (YECTECDKTFLKKSQLNIHQKTH), 288-310 (YTCSQCGKAFIKKCRLIYHQRTH), 316-338 (HGCSVCGKAFSTKFSLTTHQKTH), 344-366 (YICSECGKGFIEKRRLTAHHRTH), 372-394 (FICNKCGKGFTLKNSLITHQQTH), 400-422 (YTCSECGKGFSMKHCLMVHQRTH), 428-450 (YKCNECGKGFALKSPLIRHQRTH), 456-478 (YVCTECRKGFTMKSDLIVHQRTH), 484-506 (YICNDCGKGFTVKSRLIVHQRTH), 512-534 (YVCGECGKGFPAKIRLMGHQRTH), 540-562 (YICNECGKGFTEKSHLNVHRRTH), 568-590 (YVCSECGKGLTGKSMLIAHQRTH), 596-618 (YICNECGKGFTMKSTLSIHQQTH), 624-646 (YKCNECDKTFRKKTCLIQHQRFH), 652-674 (FACTECGKFSLRKNDLITHQRIH), 680-702 (YKCSDCGKAFTTKSGLNVHQRKH), and 708-730 (YGCSDCGKAFAHLSILVKHRRIH).

Belongs to the krueppel C2H2-type zinc-finger protein family.

The protein resides in the nucleus. Its function is as follows. May be involved in transcriptional regulation. The protein is Zinc finger protein 615 (ZNF615) of Homo sapiens (Human).